The primary structure comprises 200 residues: Recombination protein RecR (200 aa).

Residues cysteine 60 to cysteine 75 form a C4-type zinc finger. One can recognise a Toprim domain in the interval threonine 83–proline 177.

This sequence belongs to the RecR family.

Its function is as follows. May play a role in DNA repair. It seems to be involved in an RecBC-independent recombinational process of DNA repair. It may act with RecF and RecO. This chain is Recombination protein RecR, found in Francisella tularensis subsp. holarctica (strain OSU18).